Consider the following 146-residue polypeptide: Snaclec coagulation factor IX/factor X-binding protein subunit B2 (146 aa).

The N-terminal stretch at Met-1–Ala-23 is a signal peptide. Intrachain disulfides connect Cys-25–Cys-36, Cys-53–Cys-142, and Cys-119–Cys-134. A C-type lectin domain is found at Tyr-32–Glu-143.

It belongs to the snaclec family. As to quaternary structure, heterodimer of subunits A and B2; disulfide-linked. As to expression, expressed by the venom gland.

The protein localises to the secreted. In terms of biological role, anticoagulant protein which binds to the gamma-carboxyglutamic acid-domain regions of factors IX (F9) and factor X (F10) in the presence of calcium with a 1 to 1 stoichiometry. This Trimeresurus stejnegeri (Chinese green tree viper) protein is Snaclec coagulation factor IX/factor X-binding protein subunit B2.